The following is a 575-amino-acid chain: DNA-directed RNA polymerase subunit beta' (575 aa).

Residues C64, C66, C85, and C88 each contribute to the Zn(2+) site. Residues D440, D442, and D444 each contribute to the Mg(2+) site.

This sequence belongs to the RNA polymerase beta' chain family. RpoC1 subfamily. As to quaternary structure, in plastids the minimal PEP RNA polymerase catalytic core is composed of four subunits: alpha, beta, beta', and beta''. When a (nuclear-encoded) sigma factor is associated with the core the holoenzyme is formed, which can initiate transcription. Mg(2+) serves as cofactor. Requires Zn(2+) as cofactor.

The protein localises to the plastid. It carries out the reaction RNA(n) + a ribonucleoside 5'-triphosphate = RNA(n+1) + diphosphate. DNA-dependent RNA polymerase catalyzes the transcription of DNA into RNA using the four ribonucleoside triphosphates as substrates. In Euglena longa (Euglenophycean alga), this protein is DNA-directed RNA polymerase subunit beta'.